The chain runs to 512 residues: MDTSLFSLFVSILVFVFIALFKKSKKPKYVKAPAPSGAWPIIGHLHLLGGKEQLLYRTLGKMADHYGPAMSLRLGSSETFVGSSFEVAKDCFTVNDKALASLMTAAAKHMGYVFWLEMRKIAMIELLSNRRLQMLNNVRVSEISMGVKDLYSLWVKKGGSEPVMVDLKSWLEDMIANMIMRMVAGKRYFGGGGAESSEHTEEARQWRKGIAKFFHLVGIFTVSDAFPKLGWLDLQGHEKEMKQTRRELDVILERWIENHRQQRKVSGTKHNDSDFVDVMLSLAEQGKLSHLQYDANTCIKTTCLALILGGSETSPSTLTWAISLLLNNKDMLKKVQDEIDIHVGRDRNVEDSDIKNLVYLQAIIKETLRLYPAAPLLGHREAMEDCTVAGYNVPCGTRLIVNVWKIQRDPKVYMEPNEFRPERFITGEAKDFDVRGQNFELMPFGSGRRSCPGPSLAMQMLHLGLARFLHSFEVKTVLDRPVDMSESPGLTITKATPLEVLINPRLKRELFV.

The helical transmembrane segment at 1–21 (MDTSLFSLFVSILVFVFIALF) threads the bilayer. Residue cysteine 451 coordinates heme.

The protein belongs to the cytochrome P450 family. Heme is required as a cofactor.

It localises to the membrane. This chain is Cytochrome P450 82C3 (CYP82C3), found in Arabidopsis thaliana (Mouse-ear cress).